Here is a 334-residue protein sequence, read N- to C-terminus: Glutaminase (334 aa).

S76, N126, E170, N177, Y201, Y253, and V271 together coordinate substrate.

It belongs to the glutaminase family. As to quaternary structure, homotetramer.

It carries out the reaction L-glutamine + H2O = L-glutamate + NH4(+). This chain is Glutaminase, found in Trichormus variabilis (strain ATCC 29413 / PCC 7937) (Anabaena variabilis).